The following is a 457-amino-acid chain: 1-carboxybiuret hydrolase subunit AtzE (457 aa).

Active-site charge relay system residues include lysine 74 and serine 150. Serine 174 serves as the catalytic Acyl-ester intermediate.

It belongs to the amidase family. In terms of assembly, heterotetramer consisting of 2 AtzE and 2 AtzG subunits.

The catalysed reaction is 1-carboxybiuret + H2O = urea-1,3-dicarboxylate + NH4(+). It functions in the pathway xenobiotic degradation; atrazine degradation. Functionally, hydrolyzes 1-carboxybiuret to urea-1,3-dicarboxylate and NH(3). In Pseudomonas sp. (strain ADP), this protein is 1-carboxybiuret hydrolase subunit AtzE.